Reading from the N-terminus, the 440-residue chain is Argininosuccinate lyase (440 aa).

It belongs to the lyase 1 family. Argininosuccinate lyase subfamily.

It localises to the cytoplasm. The catalysed reaction is 2-(N(omega)-L-arginino)succinate = fumarate + L-arginine. The protein operates within amino-acid biosynthesis; L-arginine biosynthesis; L-arginine from L-ornithine and carbamoyl phosphate: step 3/3. The protein is Argininosuccinate lyase of Clostridium botulinum (strain Loch Maree / Type A3).